A 436-amino-acid polypeptide reads, in one-letter code: Citrate synthase (436 aa).

Active-site residues include His313 and Asp371.

Belongs to the citrate synthase family. Homohexamer.

The catalysed reaction is oxaloacetate + acetyl-CoA + H2O = citrate + CoA + H(+). The protein operates within carbohydrate metabolism; tricarboxylic acid cycle; isocitrate from oxaloacetate: step 1/2. In Acetobacter aceti, this protein is Citrate synthase (aarA).